The sequence spans 121 residues: Darcynin homolog (121 aa).

This sequence belongs to the darcynin family.

The sequence is that of Darcynin homolog from Streptomyces avermitilis (strain ATCC 31267 / DSM 46492 / JCM 5070 / NBRC 14893 / NCIMB 12804 / NRRL 8165 / MA-4680).